The chain runs to 93 residues: ATP-dependent Clp protease adapter protein ClpS (93 aa).

Belongs to the ClpS family. Binds to the N-terminal domain of the chaperone ClpA.

In terms of biological role, involved in the modulation of the specificity of the ClpAP-mediated ATP-dependent protein degradation. The chain is ATP-dependent Clp protease adapter protein ClpS from Gloeobacter violaceus (strain ATCC 29082 / PCC 7421).